Reading from the N-terminus, the 212-residue chain is Pyrrolidone-carboxylate peptidase (212 aa).

Residues Glu-78, Cys-141, and His-165 contribute to the active site.

This sequence belongs to the peptidase C15 family. In terms of assembly, homotetramer.

Its subcellular location is the cytoplasm. The catalysed reaction is Release of an N-terminal pyroglutamyl group from a polypeptide, the second amino acid generally not being Pro.. In terms of biological role, removes 5-oxoproline from various penultimate amino acid residues except L-proline. This Staphylococcus haemolyticus (strain JCSC1435) protein is Pyrrolidone-carboxylate peptidase.